A 155-amino-acid polypeptide reads, in one-letter code: Small ribosomal subunit protein bS6 (155 aa).

A compositionally biased stretch (basic and acidic residues) spans 115–137 (EADAAKAEADAARVEAEAKKAET). Positions 115–155 (EADAAKAEADAARVEAEAKKAETDETDETVDAETPENEEEN) are disordered. Over residues 138 to 155 (DETDETVDAETPENEEEN) the composition is skewed to acidic residues.

It belongs to the bacterial ribosomal protein bS6 family.

In terms of biological role, binds together with bS18 to 16S ribosomal RNA. This chain is Small ribosomal subunit protein bS6, found in Desulforapulum autotrophicum (strain ATCC 43914 / DSM 3382 / VKM B-1955 / HRM2) (Desulfobacterium autotrophicum).